We begin with the raw amino-acid sequence, 344 residues long: Follistatin (344 aa).

Positions 1–29 are cleaved as a signal peptide; sequence MVCARHQPGGLCLLLLLLCQFMEDRSAQA. In terms of domain architecture, TB spans 30–103; it reads GNCWLRQAKN…TCENVDCGPG (74 aa). 18 disulfides stabilise this stretch: C32/C55, C42/C88, C56/C91, C95/C106, C100/C116, C118/C150, C122/C143, C132/C164, C168/C179, C173/C189, C192/C225, C196/C218, C207/C239, C245/C256, C250/C267, C270/C302, C274/C295, and C284/C316. The region spanning 94 to 117 is the Follistatin-like 1 domain; sequence TCENVDCGPGKKCRMNKKNKPRCV. The Kazal-like 1 domain maps to 112–166; it reads NKPRCVCAPDCSNITWKGPVCGLDGKTYRNECALLKARCKEQPELEVQYQGKCKK. N-linked (GlcNAc...) asparagine glycosylation occurs at N124. The Follistatin-like 2 domain maps to 167 to 190; the sequence is TCRDVFCPGSSTCVVDQTNNAYCV. One can recognise a Kazal-like 2 domain in the interval 186-241; that stretch reads NAYCVTCNRICPEPSSSEQYLCGNDGVTYSSACHLRKATCLLGRSIGLAYEGKCIK. One can recognise a Follistatin-like 3 domain in the interval 244-268; sequence SCEDIQCGGGKKCLWDSKVGRGRCS. The Kazal-like 3 domain maps to 264-318; it reads RGRCSLCDELCPDSKSDEPVCASDNATYASECAMKEAACSSGVLLEVKHSGSCNS. Residue N288 is glycosylated (N-linked (GlcNAc...) asparagine). Positions 315-344 are disordered; sequence SCNSISEETEEEEEEEDQDYSFPISSILEW. The span at 321-333 shows a compositional bias: acidic residues; that stretch reads EETEEEEEEEDQD.

As to quaternary structure, interacts with GDF11. Interacts with activin A/INHBA. Interacts with myostatin/MSTN.

The protein resides in the secreted. Its subcellular location is the nucleus. It localises to the nucleolus. Its function is as follows. Multifunctional regulatory protein whose primary function is to antagonize members of the transforming growth factor beta (TGF-beta) superfamily including activin, myostatin, GDF11 or bone morphogenetic proteins (BMPs). Mechanistically, binds to these ligands in the extracellular space, blocking their type II receptor-binding site to inhibit downstream signaling. Plays an essential role in muscle fiber formation and growth both by preventing the repressive effects of myostatin and through SMAD3/AKT/mTOR signaling independently of myostatin. Also promotes neural differentiation by antagonizing the action BMP4. Acts as a specific inhibitor of the biosynthesis and secretion of pituitary follicle stimulating hormone (FSH) by sequestering activin A/INHBA. On the other hand, translocates into the nucleus where it down-regulates rRNA synthesis and ribosome biogenesis to maintain cellular energy homeostasis by binding to rDNA. This Mus musculus (Mouse) protein is Follistatin.